The primary structure comprises 394 residues: Na(+)/H(+) antiporter NhaA (394 aa).

A run of 11 helical transmembrane segments spans residues 14-34, 59-79, 95-115, 125-145, 155-175, 177-197, 204-224, 258-278, 292-312, 328-348, and 362-382; these read AGGILLLIAALLAMLCANSVF, LLMWINDGFMAVFFILVGMEV, IFPAFAAIGGMVVPALIYWFI, GWAIPMATDIAFALGIVALLS, FLLALAIIDDIGAIIVIALFF, NELSMLALIIASIAIMILITM, GIIHYVIVGTILWASVLKSGV, WCAFAILPLFAFSNAGVSLAG, ITLGLLIGKPVGVFSFCYLAV, VFAIAVLCGIGFTMSVFIAGL, and LSRLGILIGTSIAAIVGYILL.

The protein belongs to the NhaA Na(+)/H(+) (TC 2.A.33) antiporter family.

Its subcellular location is the cell inner membrane. The enzyme catalyses Na(+)(in) + 2 H(+)(out) = Na(+)(out) + 2 H(+)(in). Functionally, na(+)/H(+) antiporter that extrudes sodium in exchange for external protons. This Haemophilus ducreyi (strain 35000HP / ATCC 700724) protein is Na(+)/H(+) antiporter NhaA.